The sequence spans 161 residues: UPF0178 protein PXO_00400 (161 aa).

This sequence belongs to the UPF0178 family.

This is UPF0178 protein PXO_00400 from Xanthomonas oryzae pv. oryzae (strain PXO99A).